The sequence spans 312 residues: MIEFEKPNITVVDQEEAYGKFVVEPLERGFGTTLGNSLRRVLLTSIPGTALSYIQIDGVLHEFSTVPGVREDVTKIILNLKKLELKSLSDEEKIAEIDVTGPAIVTAADLKVDSDIEVLNPDQYICSIADGGHLHMNVAIKNGRGYVPASENKTDDMPIGVIPVDSLFSPIKKVNYQVESARVGKRDDYDKLTLEIWTDGSITPNDALSFAAKILVEHFKVFMSTDMDAQFDDVMVEKEDDKNEKKLEMTIEELDLSVRSYNCLKRAGINTVQELTDKSEADMMRVRNLGRKSLEEVKNKLAELGLSLRQDD.

Residues Met1 to Asp226 are alpha N-terminal domain (alpha-NTD). The segment at Asn243–Asp312 is alpha C-terminal domain (alpha-CTD).

Belongs to the RNA polymerase alpha chain family. In terms of assembly, homodimer. The RNAP catalytic core consists of 2 alpha, 1 beta, 1 beta' and 1 omega subunit. When a sigma factor is associated with the core the holoenzyme is formed, which can initiate transcription.

The enzyme catalyses RNA(n) + a ribonucleoside 5'-triphosphate = RNA(n+1) + diphosphate. Its function is as follows. DNA-dependent RNA polymerase catalyzes the transcription of DNA into RNA using the four ribonucleoside triphosphates as substrates. The chain is DNA-directed RNA polymerase subunit alpha from Lactobacillus gasseri (strain ATCC 33323 / DSM 20243 / BCRC 14619 / CIP 102991 / JCM 1131 / KCTC 3163 / NCIMB 11718 / NCTC 13722 / AM63).